The chain runs to 202 residues: Small ribosomal subunit protein uS4 (202 aa).

A disordered region spans residues 15–42; sequence LGDLPGLTRKAAKRSYPPGQHGQARRKR. The S4 RNA-binding domain maps to 90 to 152; it reads SRLDNICFRL…KGSKQLAEGN (63 aa).

It belongs to the universal ribosomal protein uS4 family. In terms of assembly, part of the 30S ribosomal subunit. Contacts protein S5. The interaction surface between S4 and S5 is involved in control of translational fidelity.

In terms of biological role, one of the primary rRNA binding proteins, it binds directly to 16S rRNA where it nucleates assembly of the body of the 30S subunit. Functionally, with S5 and S12 plays an important role in translational accuracy. This Synechococcus sp. (strain CC9902) protein is Small ribosomal subunit protein uS4.